We begin with the raw amino-acid sequence, 269 residues long: Putative hydro-lyase Atu3911 (269 aa).

Belongs to the D-glutamate cyclase family.

This chain is Putative hydro-lyase Atu3911, found in Agrobacterium fabrum (strain C58 / ATCC 33970) (Agrobacterium tumefaciens (strain C58)).